The primary structure comprises 59 residues: MKTKSAAVKRFKLTKSGQIKRKHAYTSHLAPHKSTKQKRHLRKQATVSNSELKRIGILI.

Residues 17-43 (GQIKRKHAYTSHLAPHKSTKQKRHLRK) are compositionally biased toward basic residues. The interval 17-47 (GQIKRKHAYTSHLAPHKSTKQKRHLRKQATV) is disordered.

Belongs to the bacterial ribosomal protein bL35 family.

The polypeptide is Large ribosomal subunit protein bL35 (Mycoplasma genitalium (strain ATCC 33530 / DSM 19775 / NCTC 10195 / G37) (Mycoplasmoides genitalium)).